A 100-amino-acid polypeptide reads, in one-letter code: Small ribosomal subunit protein uS14c (100 aa).

Positions 1 to 31 are disordered; the sequence is MARKSLIQREKKRQKLEQKYHSIRRSSKKEI.

This sequence belongs to the universal ribosomal protein uS14 family. Part of the 30S ribosomal subunit.

It is found in the plastid. It localises to the chloroplast. Functionally, binds 16S rRNA, required for the assembly of 30S particles. In Solanum bulbocastanum (Wild potato), this protein is Small ribosomal subunit protein uS14c.